We begin with the raw amino-acid sequence, 343 residues long: Tribbles homolog 2 (343 aa).

Positions 25–50 (EELSSIRSAEPSQSFSPNLGSPSPPE) are disordered. The segment covering 29–45 (SIRSAEPSQSFSPNLGS) has biased composition (polar residues). Residues 61 to 308 (IGKYLLLEPL…SQEILDHPWF (248 aa)) enclose the Protein kinase domain.

The protein belongs to the protein kinase superfamily. CAMK Ser/Thr protein kinase family. Tribbles subfamily. Highly expressed in the thyroid, also present in ovary and cerebrum.

Its subcellular location is the cytoplasm. It is found in the cytoskeleton. Functionally, interacts with MAPK kinases and regulates activation of MAP kinases. Does not display kinase activity. The protein is Tribbles homolog 2 of Canis lupus familiaris (Dog).